Here is a 130-residue protein sequence, read N- to C-terminus: Small ribosomal subunit protein uS8 (130 aa).

Lys88 bears the N6-succinyllysine mark.

The protein belongs to the universal ribosomal protein uS8 family. As to quaternary structure, component of the 40S ribosomal subunit. Part of the small subunit (SSU) processome, composed of more than 70 proteins and the RNA chaperone small nucleolar RNA (snoRNA) U3.

The protein resides in the cytoplasm. The protein localises to the nucleus. It is found in the nucleolus. Component of the small ribosomal subunit. Part of the small subunit (SSU) processome, first precursor of the small eukaryotic ribosomal subunit. During the assembly of the SSU processome in the nucleolus, many ribosome biogenesis factors, an RNA chaperone and ribosomal proteins associate with the nascent pre-rRNA and work in concert to generate RNA folding, modifications, rearrangements and cleavage as well as targeted degradation of pre-ribosomal RNA by the RNA exosome. Required for proper erythropoiesis. The polypeptide is Small ribosomal subunit protein uS8 (RPS15A) (Pongo abelii (Sumatran orangutan)).